An 855-amino-acid chain; its full sequence is DNA mismatch repair protein MutS (855 aa).

Position 616 to 623 (616 to 623 (GPNMGGKS)) interacts with ATP.

The protein belongs to the DNA mismatch repair MutS family.

This protein is involved in the repair of mismatches in DNA. It is possible that it carries out the mismatch recognition step. This protein has a weak ATPase activity. The polypeptide is DNA mismatch repair protein MutS (Salmonella dublin (strain CT_02021853)).